The sequence spans 447 residues: Alpha-1,3-mannosyl-glycoprotein 2-beta-N-acetylglucosaminyltransferase (447 aa).

Residues 1–6 (MLKKQS) lie on the Cytoplasmic side of the membrane. Residues 7 to 29 (AGLVLWGAIIFVGWNALLLLFFW) form a helical; Signal-anchor for type II membrane protein membrane-spanning segment. Residues 30–447 (TRPAPGRLPS…TWNGYDPSWN (418 aa)) lie on the Lumenal side of the membrane. An intrachain disulfide couples cysteine 115 to cysteine 145. Positions 117, 144, 190, and 212 each coordinate substrate. Aspartate 213 is a binding site for Mn(2+). A disulfide bridge connects residues cysteine 239 and cysteine 305. Aspartate 291 serves as the catalytic Proton acceptor. Serine 322 is a binding site for substrate.

This sequence belongs to the glycosyltransferase 13 family. In terms of assembly, interacts with MGAT4D. Interacts with BRI3. It depends on Mn(2+) as a cofactor. In terms of tissue distribution, appears to be present in all tissues.

It localises to the golgi apparatus membrane. The protein localises to the cytoplasm. It is found in the perinuclear region. The catalysed reaction is N(4)-(alpha-D-Man-(1-&gt;3)-[alpha-D-Man-(1-&gt;3)-[alpha-D-Man-(1-&gt;6)]-alpha-D-Man-(1-&gt;6)]-beta-D-Man-(1-&gt;4)-beta-D-GlcNAc-(1-&gt;4)-beta-D-GlcNAc)-L-asparaginyl-[protein] (N-glucan mannose isomer 5A1,2) + UDP-N-acetyl-alpha-D-glucosamine = N(4)-{beta-D-GlcNAc-(1-&gt;2)-alpha-D-Man-(1-&gt;3)-[alpha-D-Man-(1-&gt;3)-[alpha-D-Man-(1-&gt;6)]-alpha-D-Man-(1-&gt;6)]-beta-D-Man-(1-&gt;4)-beta-D-GlcNAc-(1-&gt;4)-beta-D-GlcNAc}-L-asparaginyl-[protein] + UDP + H(+). It participates in protein modification; protein glycosylation. Functionally, initiates complex N-linked carbohydrate formation. Essential for the conversion of high-mannose to hybrid and complex N-glycans. In Rattus norvegicus (Rat), this protein is Alpha-1,3-mannosyl-glycoprotein 2-beta-N-acetylglucosaminyltransferase (Mgat1).